Consider the following 128-residue polypeptide: Small ribosomal subunit protein bS6 (128 aa).

Residues 100 to 128 (SPMAKAKEERFTRRDDERREEATEAASEE) are disordered. Positions 104–121 (KAKEERFTRRDDERREEA) are enriched in basic and acidic residues.

The protein belongs to the bacterial ribosomal protein bS6 family.

Functionally, binds together with bS18 to 16S ribosomal RNA. The chain is Small ribosomal subunit protein bS6 from Aeromonas hydrophila subsp. hydrophila (strain ATCC 7966 / DSM 30187 / BCRC 13018 / CCUG 14551 / JCM 1027 / KCTC 2358 / NCIMB 9240 / NCTC 8049).